The primary structure comprises 571 residues: DDB1- and CUL4-associated factor 11 homolog (571 aa).

The tract at residues 51–75 (RMKPNHSNDSDTDFSSDDEGCPKMT) is disordered. Positions 60–69 (SDTDFSSDDE) are enriched in acidic residues. 6 WD repeats span residues 162–201 (RVATKSFCTQYIQNGTKIVVASQDEKIRFYQRNPDKSKYR), 266–305 (RDHCAVFCVKFSDSSEQIVCGTSQYSIHVFDVEQRRRIRT), 309–349 (AHED…DGDV), 357–396 (GHRDGVTHVDSRQDERYLLSNSKDQTIKVWDLRKFSNMSG), 435–479 (GHSV…VSRR), and 482–521 (GHTAVVRECDWHPTENEIVSSAWDGVTTVWTWDERQEGVI).

Belongs to the WD repeat LEC14B family.

Functionally, involved in regulation of lifespan. Required for dopaminergic CEP neuron degeneration in response to Mn(2+). Inhibits the skn-1-mediated up-regulation of tatn-1. The sequence is that of DDB1- and CUL4-associated factor 11 homolog from Caenorhabditis elegans.